The primary structure comprises 403 residues: F-box protein At2g40925 (403 aa).

An F-box domain is found at 21-71 (NRHDCEIPPDLMIEILIRLPTKSFMRFKCVSKQWSPLISGRYFCNRLFTCV).

This is F-box protein At2g40925 from Arabidopsis thaliana (Mouse-ear cress).